Reading from the N-terminus, the 886-residue chain is Isoleucine--tRNA ligase (886 aa).

Residues proline 60–histidine 70 carry the 'HIGH' region motif. Glutamate 546 provides a ligand contact to L-isoleucyl-5'-AMP. Positions lysine 587–serine 591 match the 'KMSKS' region motif. Lysine 590 provides a ligand contact to ATP. The Zn(2+) site is built by cysteine 856, cysteine 859, cysteine 870, and cysteine 873.

It belongs to the class-I aminoacyl-tRNA synthetase family. IleS type 1 subfamily. In terms of assembly, monomer. It depends on Zn(2+) as a cofactor.

The protein resides in the cytoplasm. It carries out the reaction tRNA(Ile) + L-isoleucine + ATP = L-isoleucyl-tRNA(Ile) + AMP + diphosphate. Its function is as follows. Catalyzes the attachment of isoleucine to tRNA(Ile). As IleRS can inadvertently accommodate and process structurally similar amino acids such as valine, to avoid such errors it has two additional distinct tRNA(Ile)-dependent editing activities. One activity is designated as 'pretransfer' editing and involves the hydrolysis of activated Val-AMP. The other activity is designated 'posttransfer' editing and involves deacylation of mischarged Val-tRNA(Ile). This chain is Isoleucine--tRNA ligase, found in Mesomycoplasma hyopneumoniae (strain J / ATCC 25934 / NCTC 10110) (Mycoplasma hyopneumoniae).